The following is a 1237-amino-acid chain: MSSAPRRPASGADSLHTPEPESLSPGTPGFPEQEEDELRTLGVERFEEILQEAGSRGGEEPGRSYGEEDFEYHRQSSHHIHHPLSTHLPPDARRRKTPQGPGRKPRRRPGASPTGETPTIEEGEEDEEEASEAEGFRAPPQQPSPATTPSAVQFFLQEDEGAERKPERTSPSPPTQTPHQEAAPRASKGAQTGTLVEEMVAVASATAGGDDGGAAGRPLTKAQPGHRSYNLQERRRIGSMTGVEQALLPRVPTDESEAQTLATADLDLMKSHRFEDVPGVRRHLVRKNAKGSTQAAREGREPGPTPRARPRAPHKPHEVFVELNELLLDKNQEPQWRETARWIKFEEDVEEETERWGKPHVASLSFRSLLELRRTLAHGAVLLDLDQQTLPGVAHQVVEQMVISDQIKAEDRANVLRALLLKHSHPSDEKEFSFPRNISAGSLGSLLGHHHAQGTESDPHVTEPLIGGVPETRLEVDRERELPPPAPPAGITRSKSKHELKLLEKIPENAEATVVLVGCVEFLSRPTMAFVRLREAVELDAVLEVPVPVRFLFLLLGPSSANMDYHEIGRSISTLMSDKQFHEAAYLADERDDLLTAINAFLDCSVVLPPSEVQGEELLRSVAHFQRQMLKKREEQGRLLPPGAGLEPKSAQDKALLQMVEVAGAAEDDPLRRTGRPFGGLIRDVRRRYPHYLSDFRDALDPQCLAAVIFIYFAALSPAITFGGLLGEKTKDLIGVSELIMSTALQGVVFCLLGAQPLLVIGFSGPLLVFEEAFFSFCSSNELEYLVGRVWIGFWLVFLALLMVALEGSFLVRFVSRFTQEIFAFLISLIFIYETFYKLIKIFQEHPLHGCSGSNDSEAGSSSSSNMTWATTILVPDNSSASGQSGQEKPRGQPNTALLSLVLMAGTFFIAFFLRKFKNSRFFPGRIRRVIGDFGVPIAILIMVLVDYSIEDTYTQKLSVPSGFSVTAPDKRGWVINPLGEKTPFPVWMMVASLLPAVLVFILIFMETQITTLIISKKERMLQKGSGFHLDLLLIVAMGGICALFGLPWLAAATVRSVTHANALTVMSKAVAPGDKPKIQEVKEQRVTGLLVALLVGLSMVIGDLLRQIPLAVLFGIFLYMGVTSLNGIQFYERLHLLLMPPKHHPDVTYVKKVRTMRMHLFTALQLLCLALLWAVMSTAASLAFPFILILTVPLRMVVLTRIFTEREMKCLDANEAEPVFDECEGVDEYNEMPMPV.

The tract at residues 1–238 is disordered; it reads MSSAPRRPAS…YNLQERRRIG (238 aa). Topologically, residues 1–703 are cytoplasmic; sequence MSSAPRRPAS…SDFRDALDPQ (703 aa). Basic and acidic residues-rich tracts occupy residues 38-48 and 57-74; these read LRTLGVERFEE and GGEE…EYHR. Composition is skewed to basic residues over residues 75-84 and 93-109; these read QSSHHIHHPL and RRRK…RRRP. Ser112, Ser131, Ser144, Ser170, Ser172, and Ser239 each carry phosphoserine. Residues 119–132 are compositionally biased toward acidic residues; it reads TIEEGEEDEEEASE. Position 253 is a phosphothreonine (Thr253). Position 270 is an N6-methyllysine (Lys270). Positions 285–316 are disordered; it reads VRKNAKGSTQAAREGREPGPTPRARPRAPHKP. Residue Ser439 is modified to Phosphoserine. Residues 445-466 form a disordered region; the sequence is SLLGHHHAQGTESDPHVTEPLI. The next 4 membrane-spanning stretches (helical) occupy residues 704–727, 733–770, 790–812, and 822–843; these read CLAA…GLLG, LIGV…LLVF, VWIG…SFLV, and IFAF…IKIF. The interval 704 to 1237 is membrane (anion exchange); that stretch reads CLAAVIFIYF…DEYNEMPMPV (534 aa). The Extracellular segment spans residues 844 to 896; it reads QEHPLHGCSGSNDSEAGSSSSSNMTWATTILVPDNSSASGQSGQEKPRGQPNT. Residues Asn855, Asn866, and Asn878 are each glycosylated (N-linked (GlcNAc...) asparagine). Residues 897–914 traverse the membrane as a helical segment; it reads ALLSLVLMAGTFFIAFFL. Over 915 to 929 the chain is Cytoplasmic; sequence RKFKNSRFFPGRIRR. The next 5 helical transmembrane spans lie at 930 to 950, 984 to 1006, 1032 to 1053, 1087 to 1132, and 1159 to 1195; these read VIGD…DYSI, PFPV…LIFM, LLLI…LAAA, VTGL…IQFY, and MHLF…TVPL. Cys1169 carries S-palmitoyl cysteine lipidation.

This sequence belongs to the anion exchanger (TC 2.A.31) family. Expressed in the choroid plexus epithelium (at protein level). Expressed in the parotid gland and sublingual salivary gland acinar cells (at protein level). In terms of tissue distribution, widely expressed at similar levels in all tissues examined. Expressed in the testis. As to expression, predominantly expressed in stomach although they are also detected at lower levels in other tissues. Expressed in the testis. Stomach-specific. In terms of tissue distribution, expressed at slightly higher levels in lung and stomach than in other tissues.

It localises to the apical cell membrane. Its subcellular location is the basolateral cell membrane. It carries out the reaction hydrogencarbonate(in) + chloride(out) = hydrogencarbonate(out) + chloride(in). With respect to regulation, inhibited by 4,4'-diisothiocyanatostilbene-2,2'-disulfonic acid (DIDS) and acetazolamide. Muscarinic receptor stimulation enhances activity through a Ca(2+)-dependent mechanism. Sodium-independent anion exchanger which mediates the electroneutral exchange of chloride for bicarbonate ions across the cell membrane. Plays an important role in osteoclast differentiation and function. Regulates bone resorption and calpain-dependent actin cytoskeleton organization in osteoclasts via anion exchange-dependent control of pH. Essential for intracellular pH regulation in CD8(+) T-cells upon CD3 stimulation, modulating CD8(+) T-cell responses. In terms of biological role, plays a critical role in male fertility and spermiogenesis. This chain is Anion exchange protein 2 (Slc4a2), found in Mus musculus (Mouse).